We begin with the raw amino-acid sequence, 737 residues long: MFGGLLGEETKRHFERLMKTKNDRLGASHRNERSIRDGDMVDAPFLNFAIPVPRRHQTVMPAIGILHNCCDSLGIYSAITTRMLYSSIACSEFDELRRDSVPRCYPRITNAQAFLSPMMMRVANSIIFQEYDEMECAAHRNAYYSTMNSFISMRTSDAFKQLTVFISRFSKLLIASFRDVNKLDDHTVKKRARIDAPSYDKLHGTLELFQKMILMHATYFVTSVLLGDHAERAERLLRVAFDTPHFSDIVTRHFRQRATVFLVPRRHGKTWFLVPLIALAMSSFEGIRIGYTSHIRKAIEPVFEDIGDRLRRWFGAHRVDHVKGETITFSFPSGLKSTVTFASSHNTNSIRGQDFNLLFVDEANFIRPDAVQTIIGFLNQATCKIIFVSSTNSGKASTSFLYGLKGSADDLLNVVTYICDEHMKHVTDYTNATSCSCYVLNKPVFITMDGAMRRTAEMFLPDSFMQEIIGGGVVDRTICQGDRSIFTASAIDRFLIYRPSTVNNQDPFSQDLYVYVDPAFTANTKASGTGVAVIGKYGTDYIVFGLEHYFLRALTGESSDSIGYCVAQCLIQICAIHRKRFGVIKIAIEGNSNQDSAVAIATRIAIEMISYMKAAVAPTPHNVSFYHSKSNGTDVEYPYFLLQRQKTTAFDFFIAQFNSGRVLASQDLVSTTVSLTTDPVEYLTKQLTNISEVVTGPTCTRTFSGKKGGNDDTVVALTMAVYISAHIPDMAFAPIRV.

The short motif at 188–194 (VKKRARI) is the Nuclear localization signal element. Positions 263–270 (VPRRHGKT) match the Walker A motif motif. Residues 357–362 (LLFVDE) carry the Walker B motif motif. The active-site For ATPase activity is the Glu-362. Active-site for nuclease activity residues include Asp-517, Glu-589, and Asp-712.

This sequence belongs to the herpesviridae TRM3 protein family. In terms of assembly, interacts with the terminase subunits TRM1 and TRM2. Interacts with portal protein.

It is found in the host nucleus. Component of the molecular motor that translocates viral genomic DNA in empty capsid during DNA packaging. Forms a tripartite terminase complex together with TRM1 and TRM2 in the host cytoplasm. Once the complex reaches the host nucleus, it interacts with the capsid portal vertex. This portal forms a ring in which genomic DNA is translocated into the capsid. TRM3 carries an RNase H-like nuclease activity that plays an important role for the cleavage of concatemeric viral DNA into unit length genomes. The chain is Tripartite terminase subunit 3 from Gallus gallus (Chicken).